The chain runs to 442 residues: Trigger factor (442 aa).

The 81-residue stretch at 170–250 folds into the PPIase FKBP-type domain; sequence GDIATVDYHE…LKALKQRQLP (81 aa).

Belongs to the FKBP-type PPIase family. Tig subfamily.

The protein localises to the cytoplasm. The catalysed reaction is [protein]-peptidylproline (omega=180) = [protein]-peptidylproline (omega=0). Its function is as follows. Involved in protein export. Acts as a chaperone by maintaining the newly synthesized protein in an open conformation. Functions as a peptidyl-prolyl cis-trans isomerase. The sequence is that of Trigger factor (tig) from Treponema pallidum (strain Nichols).